The sequence spans 224 residues: Deoxyribose-phosphate aldolase (224 aa).

Aspartate 94 functions as the Proton donor/acceptor in the catalytic mechanism. Residue lysine 158 is the Schiff-base intermediate with acetaldehyde of the active site. Lysine 187 (proton donor/acceptor) is an active-site residue.

The protein belongs to the DeoC/FbaB aldolase family. DeoC type 1 subfamily. Homodimer.

It localises to the cytoplasm. It catalyses the reaction 2-deoxy-D-ribose 5-phosphate = D-glyceraldehyde 3-phosphate + acetaldehyde. Its activity is regulated as follows. Activated by citrate. Inhibited by NaBH(4). Activity is independent of divalent metal cations. In terms of biological role, catalyzes a reversible aldol reaction between acetaldehyde and D-glyceraldehyde 3-phosphate to generate 2-deoxy-D-ribose 5-phosphate. Could be involved in pentose biosynthesis. The polypeptide is Deoxyribose-phosphate aldolase (Thermococcus kodakarensis (strain ATCC BAA-918 / JCM 12380 / KOD1) (Pyrococcus kodakaraensis (strain KOD1))).